A 635-amino-acid polypeptide reads, in one-letter code: Biosynthetic arginine decarboxylase (635 aa).

Lys103 is modified (N6-(pyridoxal phosphate)lysine). 283–293 (FDVGGGLGVDY) serves as a coordination point for substrate.

It belongs to the Orn/Lys/Arg decarboxylase class-II family. SpeA subfamily. Requires Mg(2+) as cofactor. Pyridoxal 5'-phosphate serves as cofactor.

It catalyses the reaction L-arginine + H(+) = agmatine + CO2. The protein operates within amine and polyamine biosynthesis; agmatine biosynthesis; agmatine from L-arginine: step 1/1. Its function is as follows. Catalyzes the biosynthesis of agmatine from arginine. This chain is Biosynthetic arginine decarboxylase, found in Proteus mirabilis (strain HI4320).